Here is a 62-residue protein sequence, read N- to C-terminus: Large ribosomal subunit protein uL30 (62 aa).

It belongs to the universal ribosomal protein uL30 family. Part of the 50S ribosomal subunit.

The protein is Large ribosomal subunit protein uL30 of Ruegeria pomeroyi (strain ATCC 700808 / DSM 15171 / DSS-3) (Silicibacter pomeroyi).